A 392-amino-acid polypeptide reads, in one-letter code: S-adenosylmethionine synthase (392 aa).

Histidine 17 lines the ATP pocket. Position 19 (aspartate 19) interacts with Mg(2+). A K(+)-binding site is contributed by glutamate 45. L-methionine contacts are provided by glutamate 58 and glutamine 102. Residues 102–112 (QSADIAQGVDA) are flexible loop. ATP is bound by residues 169–171 (DAK), 235–236 (KF), aspartate 244, 250–251 (RK), alanine 267, and lysine 271. Aspartate 244 contributes to the L-methionine binding site. L-methionine is bound at residue lysine 275.

This sequence belongs to the AdoMet synthase family. As to quaternary structure, homotetramer; dimer of dimers. The cofactor is Mg(2+). K(+) serves as cofactor.

Its subcellular location is the cytoplasm. The catalysed reaction is L-methionine + ATP + H2O = S-adenosyl-L-methionine + phosphate + diphosphate. The protein operates within amino-acid biosynthesis; S-adenosyl-L-methionine biosynthesis; S-adenosyl-L-methionine from L-methionine: step 1/1. In terms of biological role, catalyzes the formation of S-adenosylmethionine (AdoMet) from methionine and ATP. The overall synthetic reaction is composed of two sequential steps, AdoMet formation and the subsequent tripolyphosphate hydrolysis which occurs prior to release of AdoMet from the enzyme. The sequence is that of S-adenosylmethionine synthase from Methylobacterium radiotolerans (strain ATCC 27329 / DSM 1819 / JCM 2831 / NBRC 15690 / NCIMB 10815 / 0-1).